We begin with the raw amino-acid sequence, 139 residues long: GSK3-beta interaction protein (139 aa).

Residues 1-22 (METDCNPMELSSMSGFEEGSEL) are disordered. A required for PRKAR2A interaction; contributes to a protective effect against H(2)O(2)-induced apoptosis region spans residues 41–45 (VNDVL). An interaction with GSK3B and acts as a GSK3B inhibitor region spans residues 115–139 (SPAYREAFGNALLQRLEALKRDGQS).

This sequence belongs to the GSKIP family. Forms a complex composed of PRKAR2A or PRKAR2B, GSK3B and GSKIP through GSKIP interaction; facilitates PKA-induced phosphorylation of GSK3B leading to GSK3B inactivation; recruits DNM1L through GSK3B for PKA-mediated phosphorylation of DNM1L; promotes beta-catenin degradation through GSK3B-induced phosphorylation of beta-catenin; stabilizes beta-catenin and enhances Wnt-induced signaling through PKA-induced phosphorylation of beta-catenin. Interacts with GSK3B; induces GSK3B-mediated phosphorylation of GSKIP and inhibits GSK3B kinase activity. Phosphorylated by GSK3B.

Its subcellular location is the cytoplasm. The protein localises to the nucleus. Its function is as follows. A-kinase anchoring protein for GSK3B and PKA that regulates or facilitates their kinase activity towards their targets. The ternary complex enhances Wnt-induced signaling by facilitating the GSK3B- and PKA-induced phosphorylation of beta-catenin leading to beta-catenin degradation and stabilization respectively. Upon cAMP activation, the ternary complex contributes to neuroprotection against oxidative stress-induced apoptosis by facilitating the PKA-induced phosphorylation of DML1 and PKA-induced inactivation of GSK3B. During neurite outgrowth promotes neuron proliferation; while increases beta-catenin-induced transcriptional activity through GSK3B kinase activity inhibition, reduces N-cadherin level to promote cell cycle progression. May play a role in cleft palate formation and is required for postnatal life through modulation of the activity of GSK3B during development. The chain is GSK3-beta interaction protein from Macaca fascicularis (Crab-eating macaque).